A 507-amino-acid chain; its full sequence is Putative thymidine phosphorylase (507 aa).

The protein belongs to the thymidine/pyrimidine-nucleoside phosphorylase family. Type 2 subfamily.

The enzyme catalyses thymidine + phosphate = 2-deoxy-alpha-D-ribose 1-phosphate + thymine. The polypeptide is Putative thymidine phosphorylase (Ralstonia nicotianae (strain ATCC BAA-1114 / GMI1000) (Ralstonia solanacearum)).